Consider the following 38-residue polypeptide: RapG inhibitor (38 aa).

A propeptide spanning residues 1–33 (MKRFLIGAGVAAVILSGWFIADHQTHSQEMKVA) is cleaved from the precursor.

Belongs to the Phr family. In terms of processing, contains a predicted signal peptide cleavage site in the N-terminal region, however the propeptide is probably subject to only one processing event, at the N-terminal end of the mature peptide.

It localises to the secreted. It is found in the cytoplasm. Functionally, signaling molecule involved in the regulation of expression of DegU-controlled genes. Secreted during production, but the mature peptide acts intracellularly, indicating that it needs to be imported into the cell to function. Stimulates the DegU-dependent expression of aprE, an extracellular alkaline protease. Acts by inhibiting RapG activity. At high concentrations, represses the DegS-dependent aprE expression. The protein is RapG inhibitor (phrG) of Bacillus subtilis (strain 168).